Here is a 191-residue protein sequence, read N- to C-terminus: GDP-mannose pyrophosphatase (191 aa).

Residues tyrosine 17, 38–40 (KRE), arginine 67, and 85–87 (AGL) each bind GDP-alpha-D-mannose. Residues 43–180 (DRGNGAAVLL…VIRDAKTVLL (138 aa)) enclose the Nudix hydrolase domain. Residues alanine 85, glutamate 100, and glutamate 104 each coordinate Mg(2+). The Nudix box signature appears at 86-106 (GLLDDDEPEVCIRKEAIEETG). Residues glutamate 104, glutamate 127, 150 to 151 (DE), and lysine 176 contribute to the GDP-alpha-D-mannose site. Mg(2+) is bound at residue glutamate 151.

This sequence belongs to the Nudix hydrolase family. NudK subfamily. In terms of assembly, homodimer. It depends on Mg(2+) as a cofactor.

It carries out the reaction GDP-alpha-D-mannose + H2O = alpha-D-mannose 1-phosphate + GMP + 2 H(+). Functionally, nucleoside diphosphate sugar hydrolase that hydrolyzes GDP-mannose as its preferred substrate, yielding GMP and mannose-1-phosphate. The sequence is that of GDP-mannose pyrophosphatase (nudK) from Cronobacter sakazakii (strain ATCC BAA-894) (Enterobacter sakazakii).